Here is an 85-residue protein sequence, read N- to C-terminus: N.vectensis toxin 1 4 (85 aa).

An N-terminal signal peptide occupies residues 1–20 (MASFKIVIVCLALLVAVASA). Positions 21–36 (RRRDMMSDDELDYHYS) are excised as a propeptide. Disulfide bonds link Cys-42-Cys-82, Cys-44-Cys-72, and Cys-65-Cys-83.

Belongs to the sea anemone sodium channel inhibitory toxin family. Type II subfamily. Expressed in ectodermal glands and in clumps outside of the extodermal layer. Is not expressed in nematocytes. In adult female tissues, shows similar expression levels in mesenteries (gametes-producing tissue), tentacles, pharynx and physa.

It localises to the secreted. Its function is as follows. Binds to site 3 of voltage-gated sodium channels and inhibits the inactivation process. Is highly active on DmNav1/TipE (drosophila) and is only extremely weakly active on rat Nav1.4-beta-1/SCN4A-SCN1B, and on human Nav1.5-beta-1/SCN5A-beta-1. This reveals high specificity for arthropod over mammalian channels. In vivo, when released into the medium, this recombinant toxin induces impaired swimming, paralysis and death of the crustacean A.nauplii within several hours. Also causes paralysis of cherry shrimps immediately after injection at very low doses. Its effect on zebrafish (D.rerio) larvae is also rapid, since it induces tail twitching accompanied by impaired swimming after 20 minutes and complete paralysis within 45 minutes. It has also been observed to cause death of zebrafish larvae within 1 hour. This is N.vectensis toxin 1 4 from Nematostella vectensis (Starlet sea anemone).